Consider the following 65-residue polypeptide: Large ribosomal subunit protein bL35 (65 aa).

This sequence belongs to the bacterial ribosomal protein bL35 family.

The protein is Large ribosomal subunit protein bL35 of Oleidesulfovibrio alaskensis (strain ATCC BAA-1058 / DSM 17464 / G20) (Desulfovibrio alaskensis).